The chain runs to 349 residues: Probable arabinogalactan endo-beta-1,4-galactanase A (349 aa).

The first 15 residues, M1–A15, serve as a signal peptide directing secretion. N-linked (GlcNAc...) asparagine glycosylation occurs at N126. E150 serves as the catalytic Proton donor. The active-site Nucleophile is the E261.

This sequence belongs to the glycosyl hydrolase 53 family.

The protein resides in the secreted. It carries out the reaction The enzyme specifically hydrolyzes (1-&gt;4)-beta-D-galactosidic linkages in type I arabinogalactans.. Endogalactanase involved in the degradation of plant cell wall polysaccharides, and more particularly of hairy regions of pectin. This chain is Probable arabinogalactan endo-beta-1,4-galactanase A (galA), found in Aspergillus terreus (strain NIH 2624 / FGSC A1156).